A 321-amino-acid polypeptide reads, in one-letter code: Thioredoxin reductase (321 aa).

An FAD-binding site is contributed by Thr36 to Gln43. Cys136 and Cys139 are oxidised to a cystine. FAD is bound at residue Asp287–Ala296.

Belongs to the class-II pyridine nucleotide-disulfide oxidoreductase family. Homodimer. FAD is required as a cofactor.

It localises to the cytoplasm. It catalyses the reaction [thioredoxin]-dithiol + NADP(+) = [thioredoxin]-disulfide + NADPH + H(+). The chain is Thioredoxin reductase (trxB) from Escherichia coli O157:H7.